The following is a 238-amino-acid chain: Ribonuclease PH (238 aa).

Phosphate-binding positions include arginine 86 and 124-126 (GTR).

This sequence belongs to the RNase PH family. As to quaternary structure, homohexameric ring arranged as a trimer of dimers.

It catalyses the reaction tRNA(n+1) + phosphate = tRNA(n) + a ribonucleoside 5'-diphosphate. Its function is as follows. Phosphorolytic 3'-5' exoribonuclease that plays an important role in tRNA 3'-end maturation. Removes nucleotide residues following the 3'-CCA terminus of tRNAs; can also add nucleotides to the ends of RNA molecules by using nucleoside diphosphates as substrates, but this may not be physiologically important. Probably plays a role in initiation of 16S rRNA degradation (leading to ribosome degradation) during starvation. The protein is Ribonuclease PH of Geobacter metallireducens (strain ATCC 53774 / DSM 7210 / GS-15).